An 832-amino-acid chain; its full sequence is Protein P (832 aa).

The segment at 1 to 177 is terminal protein domain (TP); that stretch reads MPLSYQHFRR…FCGSPYSWEQ (177 aa). The segment at 178–335 is spacer; sequence KLQHGAESFH…YCLSHIVNLL (158 aa). Disordered regions lie at residues 186–229 and 275–305; these read FHQQ…QGRS and YPTVSTSKRRSSSGHAVDFHNLPPSSARSQS. Residues 336 to 679 are polymerase/reverse transcriptase domain (RT); the sequence is EDWGPCTEHG…YMNLYPVARQ (344 aa). A Reverse transcriptase domain is found at 346-589; that stretch reads EHHIRIPRTP…YSLHFMGYVI (244 aa). Residues aspartate 418, aspartate 540, and aspartate 541 each contribute to the Mg(2+) site.

Belongs to the hepadnaviridae P protein family.

The catalysed reaction is DNA(n) + a 2'-deoxyribonucleoside 5'-triphosphate = DNA(n+1) + diphosphate. It catalyses the reaction Endonucleolytic cleavage to 5'-phosphomonoester.. With respect to regulation, activated by host HSP70 and HSP40 in vitro to be able to bind the epsilon loop of the pgRNA. Because deletion of the RNase H region renders the protein partly chaperone-independent, the chaperones may be needed indirectly to relieve occlusion of the RNA-binding site by this domain. Inhibited by several reverse-transcriptase inhibitors: Lamivudine, Adefovir and Entecavir. In terms of biological role, multifunctional enzyme that converts the viral RNA genome into dsDNA in viral cytoplasmic capsids. This enzyme displays a DNA polymerase activity that can copy either DNA or RNA templates, and a ribonuclease H (RNase H) activity that cleaves the RNA strand of RNA-DNA heteroduplexes in a partially processive 3'- to 5'-endonucleasic mode. Neo-synthesized pregenomic RNA (pgRNA) are encapsidated together with the P protein, and reverse-transcribed inside the nucleocapsid. Initiation of reverse-transcription occurs first by binding the epsilon loop on the pgRNA genome, and is initiated by protein priming, thereby the 5'-end of (-)DNA is covalently linked to P protein. Partial (+)DNA is synthesized from the (-)DNA template and generates the relaxed circular DNA (RC-DNA) genome. After budding and infection, the RC-DNA migrates in the nucleus, and is converted into a plasmid-like covalently closed circular DNA (cccDNA). The activity of P protein does not seem to be necessary for cccDNA generation, and is presumably released from (+)DNA by host nuclear DNA repair machinery. The polypeptide is Protein P (Homo sapiens (Human)).